Reading from the N-terminus, the 194-residue chain is Holliday junction branch migration complex subunit RuvA (194 aa).

A domain I region spans residues 1–64 (MIARLSGILV…EDAQLLYGFG (64 aa)). The domain II stretch occupies residues 65–141 (SDQERATFRQ…FAIDGGTALA (77 aa)). The tract at residues 141–144 (AGSN) is flexible linker. The interval 145–194 (PAKSASSDVLNALLALGYNEREALAAVKQLPADIAVAEGIKLSLKSLSKT) is domain III.

It belongs to the RuvA family. Homotetramer. Forms an RuvA(8)-RuvB(12)-Holliday junction (HJ) complex. HJ DNA is sandwiched between 2 RuvA tetramers; dsDNA enters through RuvA and exits via RuvB. An RuvB hexamer assembles on each DNA strand where it exits the tetramer. Each RuvB hexamer is contacted by two RuvA subunits (via domain III) on 2 adjacent RuvB subunits; this complex drives branch migration. In the full resolvosome a probable DNA-RuvA(4)-RuvB(12)-RuvC(2) complex forms which resolves the HJ.

The protein resides in the cytoplasm. Functionally, the RuvA-RuvB-RuvC complex processes Holliday junction (HJ) DNA during genetic recombination and DNA repair, while the RuvA-RuvB complex plays an important role in the rescue of blocked DNA replication forks via replication fork reversal (RFR). RuvA specifically binds to HJ cruciform DNA, conferring on it an open structure. The RuvB hexamer acts as an ATP-dependent pump, pulling dsDNA into and through the RuvAB complex. HJ branch migration allows RuvC to scan DNA until it finds its consensus sequence, where it cleaves and resolves the cruciform DNA. This is Holliday junction branch migration complex subunit RuvA from Methylobacillus flagellatus (strain ATCC 51484 / DSM 6875 / VKM B-1610 / KT).